The following is a 318-amino-acid chain: Ribosomal RNA small subunit methyltransferase H (318 aa).

Residues 37-39 (GGH), Asp-57, Phe-83, Asp-104, and Gln-111 each bind S-adenosyl-L-methionine.

It belongs to the methyltransferase superfamily. RsmH family.

It is found in the cytoplasm. It catalyses the reaction cytidine(1402) in 16S rRNA + S-adenosyl-L-methionine = N(4)-methylcytidine(1402) in 16S rRNA + S-adenosyl-L-homocysteine + H(+). In terms of biological role, specifically methylates the N4 position of cytidine in position 1402 (C1402) of 16S rRNA. This is Ribosomal RNA small subunit methyltransferase H from Neisseria gonorrhoeae (strain NCCP11945).